The following is a 587-amino-acid chain: Pyruvate kinase (587 aa).

R33 lines the substrate pocket. Positions 35, 37, 67, and 68 each coordinate K(+). 35–38 (NFSH) contributes to the ATP binding site. Positions 74 and 157 each coordinate ATP. A substrate-binding site is contributed by K221. Residue E223 coordinates Mg(2+). G246, D247, and T279 together coordinate substrate. Mg(2+) is bound at residue D247.

It belongs to the pyruvate kinase family. This sequence in the C-terminal section; belongs to the PEP-utilizing enzyme family. Homotetramer. Mg(2+) serves as cofactor. It depends on K(+) as a cofactor. In terms of processing, the N-terminus is blocked.

The catalysed reaction is pyruvate + ATP = phosphoenolpyruvate + ADP + H(+). It functions in the pathway carbohydrate degradation; glycolysis; pyruvate from D-glyceraldehyde 3-phosphate: step 5/5. With respect to regulation, exhibits homotropic positive cooperativity for PEP. Allosterically activated by ribose-5-phosphate, AMP and other nucleoside monophosphates but not by fructose-1,6-bisphosphate. In terms of biological role, catalyzes the phosphoryl transfer from phosphoenolpyruvate (PEP) to ADP to form pyruvate and ATP. Has a broad specificity for nucleoside diphosphates and can use ADP, GDP, IDP and UDP. The polypeptide is Pyruvate kinase (pyk) (Geobacillus stearothermophilus (Bacillus stearothermophilus)).